Here is a 1357-residue protein sequence, read N- to C-terminus: Protein CFT1 (1357 aa).

A disordered region spans residues 445–465 (TREAHNPSSGTNSLMDINDDD). Positions 450-459 (NPSSGTNSLM) are enriched in polar residues.

The protein belongs to the CFT1 family. In terms of assembly, component of the cleavage and polyadenylation factor (CPF) complex, which is composed of at least PTI1, SYC1, SSU72, GLC7, MPE1, REF2, PFS2, PTA1, YSH1/BRR5, SWD2, CFT2/YDH1, YTH1, CFT1/YHH1, FIP1 and PAP1. Interacts with the phosphorylated CTD domain of RPB1/RNA polymerase II.

Its subcellular location is the nucleus. In terms of biological role, RNA-binding component of the cleavage and polyadenylation factor (CPF) complex, which plays a key role in polyadenylation-dependent pre-mRNA 3'-end formation and cooperates with cleavage factors including the CFIA complex and NAB4/CFIB. Involved in poly(A) site recognition. May be involved in coupling transcription termination and mRNA 3'-end formation. The polypeptide is Protein CFT1 (CFT1) (Saccharomyces cerevisiae (strain ATCC 204508 / S288c) (Baker's yeast)).